A 223-amino-acid polypeptide reads, in one-letter code: Phosphoribosylformylglycinamidine synthase subunit PurQ (223 aa).

The Glutamine amidotransferase type-1 domain maps to 3 to 223 (SAVVQLPGLN…FASALDVIAA (221 aa)). Cysteine 86 serves as the catalytic Nucleophile. Residues histidine 196 and glutamate 198 contribute to the active site.

In terms of assembly, part of the FGAM synthase complex composed of 1 PurL, 1 PurQ and 2 PurS subunits.

It is found in the cytoplasm. The enzyme catalyses N(2)-formyl-N(1)-(5-phospho-beta-D-ribosyl)glycinamide + L-glutamine + ATP + H2O = 2-formamido-N(1)-(5-O-phospho-beta-D-ribosyl)acetamidine + L-glutamate + ADP + phosphate + H(+). It catalyses the reaction L-glutamine + H2O = L-glutamate + NH4(+). Its pathway is purine metabolism; IMP biosynthesis via de novo pathway; 5-amino-1-(5-phospho-D-ribosyl)imidazole from N(2)-formyl-N(1)-(5-phospho-D-ribosyl)glycinamide: step 1/2. Functionally, part of the phosphoribosylformylglycinamidine synthase complex involved in the purines biosynthetic pathway. Catalyzes the ATP-dependent conversion of formylglycinamide ribonucleotide (FGAR) and glutamine to yield formylglycinamidine ribonucleotide (FGAM) and glutamate. The FGAM synthase complex is composed of three subunits. PurQ produces an ammonia molecule by converting glutamine to glutamate. PurL transfers the ammonia molecule to FGAR to form FGAM in an ATP-dependent manner. PurS interacts with PurQ and PurL and is thought to assist in the transfer of the ammonia molecule from PurQ to PurL. The chain is Phosphoribosylformylglycinamidine synthase subunit PurQ from Rhizobium johnstonii (strain DSM 114642 / LMG 32736 / 3841) (Rhizobium leguminosarum bv. viciae).